Here is a 271-residue protein sequence, read N- to C-terminus: MASENMTPQDYIGHHLNNLQLDLRTFSLVDPHNPPATFWTLNIDSMFFSVVLGLLFLLMFRSVAKKATSGVPGKFQTAIELVIGFVHGSVKDMYHGKSKLIAPLALTIFVWVFLMNLMDLLPIDLLPYIGEHIFGLPALRVVPSADVNITLSMALGVFILILFYSIKMKGIGGFTKELTLQPFNHWAFIPVNLILEGVSLLSKPVSLGLRLFGNMYAGELIFILIAGLLPWWSQWILNVPWAIFHILIITLQAFIFMGLTIVYLSMASEEH.

5 helical membrane passes run 38–58 (FWTL…LFLL), 100–120 (LIAP…LMDL), 146–166 (DVNI…FYSI), 220–240 (LIFI…LNVP), and 242–262 (AIFH…LTIV).

It belongs to the ATPase A chain family. In terms of assembly, F-type ATPases have 2 components, CF(1) - the catalytic core - and CF(0) - the membrane proton channel. CF(1) has five subunits: alpha(3), beta(3), gamma(1), delta(1), epsilon(1). CF(0) has three main subunits: a(1), b(2) and c(9-12). The alpha and beta chains form an alternating ring which encloses part of the gamma chain. CF(1) is attached to CF(0) by a central stalk formed by the gamma and epsilon chains, while a peripheral stalk is formed by the delta and b chains.

It localises to the cell inner membrane. Key component of the proton channel; it plays a direct role in the translocation of protons across the membrane. The protein is ATP synthase subunit a of Citrobacter koseri (strain ATCC BAA-895 / CDC 4225-83 / SGSC4696).